The following is a 296-amino-acid chain: Nucleotide-binding protein SUB0630 (296 aa).

13–20 (GMSGAGKT) serves as a coordination point for ATP. Residue 63-66 (DMRS) coordinates GTP.

The protein belongs to the RapZ-like family.

Displays ATPase and GTPase activities. The protein is Nucleotide-binding protein SUB0630 of Streptococcus uberis (strain ATCC BAA-854 / 0140J).